A 125-amino-acid chain; its full sequence is MDIIKKNKKIIILVCLMFLAIMVYIYKSNGPDKTNDNILEVKITIKDHKFVPNIVEVPKSTKIRLIIHNADDTIEEFESHDLHREKIVMPHESINIILAPLKPGKYEIFGDFHQDTAQGFIIVND.

Residues 10-26 (IIILVCLMFLAIMVYIY) form a helical membrane-spanning segment.

It is found in the membrane. This is an uncharacterized protein from Rickettsia prowazekii (strain Madrid E).